The sequence spans 217 residues: Elongation factor Ts (217 aa).

An involved in Mg(2+) ion dislocation from EF-Tu region spans residues 82–85 (TDFV).

The protein belongs to the EF-Ts family.

Its subcellular location is the cytoplasm. Its function is as follows. Associates with the EF-Tu.GDP complex and induces the exchange of GDP to GTP. It remains bound to the aminoacyl-tRNA.EF-Tu.GTP complex up to the GTP hydrolysis stage on the ribosome. This Synechococcus sp. (strain RCC307) protein is Elongation factor Ts.